A 312-amino-acid chain; its full sequence is Ribonuclease Z (312 aa).

Positions 62, 64, 66, 67, 144, 215, and 273 each coordinate Zn(2+). Asp-66 functions as the Proton acceptor in the catalytic mechanism.

Belongs to the RNase Z family. In terms of assembly, homodimer. The cofactor is Zn(2+).

The catalysed reaction is Endonucleolytic cleavage of RNA, removing extra 3' nucleotides from tRNA precursor, generating 3' termini of tRNAs. A 3'-hydroxy group is left at the tRNA terminus and a 5'-phosphoryl group is left at the trailer molecule.. Functionally, zinc phosphodiesterase, which displays some tRNA 3'-processing endonuclease activity. Probably involved in tRNA maturation, by removing a 3'-trailer from precursor tRNA. The protein is Ribonuclease Z of Prochlorococcus marinus (strain AS9601).